We begin with the raw amino-acid sequence, 29 residues long: uncharacterized protein (29 aa).

This is an uncharacterized protein from Saccharomyces cerevisiae (strain ATCC 204508 / S288c) (Baker's yeast).